A 424-amino-acid chain; its full sequence is UPF0761 membrane protein Smlt0865 (424 aa).

The next 6 helical transmembrane spans lie at 48–68 (VFAL…FPVF), 101–121 (SAGQ…LITL), 144–164 (FLVY…SLAV), 181–201 (WLAE…CITL), 216–236 (AVPG…GIGA), and 251–271 (VAFV…VLLG).

This sequence belongs to the UPF0761 family.

It is found in the cell inner membrane. This is UPF0761 membrane protein Smlt0865 from Stenotrophomonas maltophilia (strain K279a).